Reading from the N-terminus, the 214-residue chain is RING-H2 finger protein ATL67 (214 aa).

The helical transmembrane segment at 33–53 threads the bilayer; the sequence is LGFGYSIAIALGFLVLLSTVL. The segment at 138-180 adopts an RING-type; atypical zinc-finger fold; it reads CSICLCEYKEAEMLRMMPECKHYFHLCCLDAWLKLNGSCPVCR.

It belongs to the RING-type zinc finger family. ATL subfamily.

Its subcellular location is the membrane. It catalyses the reaction S-ubiquitinyl-[E2 ubiquitin-conjugating enzyme]-L-cysteine + [acceptor protein]-L-lysine = [E2 ubiquitin-conjugating enzyme]-L-cysteine + N(6)-ubiquitinyl-[acceptor protein]-L-lysine.. Its pathway is protein modification; protein ubiquitination. This chain is RING-H2 finger protein ATL67 (ATL67), found in Arabidopsis thaliana (Mouse-ear cress).